We begin with the raw amino-acid sequence, 848 residues long: Phosphatidate phosphatase LPIN3 (848 aa).

Residues 1–108 are N-LIP; sequence MNYVGQLAET…VPPRLCTSPI (108 aa). Disordered regions lie at residues 97–233, 271–298, and 314–373; these read EDVP…SPLR, PEEP…PGVR, and AVDS…NQHL. Residues 135–144 carry the Nuclear localization signal motif; the sequence is GRRKRRRRRK. The segment covering 135–146 has biased composition (basic residues); the sequence is GRRKRRRRRKPR. Residues 151–164 are compositionally biased toward acidic residues; the sequence is DAVDSSSEELEAGA. Phosphoserine is present on residues Ser-155 and Ser-156. Positions 165–191 are enriched in low complexity; sequence ESELTLLEKPTPESPSAQEAEEPSSQP. The residue at position 218 (Ser-218) is a Phosphoserine. Low complexity predominate over residues 271–282; sequence PEEPSPSSSPSE. The segment covering 342 to 358 has biased composition (polar residues); the sequence is KSWSWTTPESHTPSGHP. Ser-460 carries the phosphoserine modification. The span at 536 to 556 shows a compositional bias: basic and acidic residues; the sequence is EEHSSQREKAATRKQQGEKTE. Residues 536-568 are disordered; sequence EEHSSQREKAATRKQQGEKTEVLSSDDDVPDSP. The segment at 587-789 is C-LIP; that stretch reads YKKSLRLSSD…RIFTVNPRGE (203 aa). A DXDXT motif motif is present at residues 641 to 645; the sequence is DIDGT. Residues 652–656 carry the LXXIL motif motif; sequence LGHIL.

This sequence belongs to the lipin family. Mg(2+) serves as cofactor. As to expression, significant expression in intestine and other regions of the gastrointestinal tract.

The protein resides in the nucleus. It carries out the reaction a 1,2-diacyl-sn-glycero-3-phosphate + H2O = a 1,2-diacyl-sn-glycerol + phosphate. Inhibited by N-ethylmaleimide. Functionally, magnesium-dependent phosphatidate phosphatase enzyme which catalyzes the conversion of phosphatidic acid to diacylglycerol during triglyceride, phosphatidylcholine and phosphatidylethanolamine biosynthesis therefore regulates fatty acid metabolism. The polypeptide is Phosphatidate phosphatase LPIN3 (Mus musculus (Mouse)).